Reading from the N-terminus, the 431-residue chain is Glucose-1-phosphate adenylyltransferase (431 aa).

Lys-39 lines the beta-D-fructose 1,6-bisphosphate pocket. 3 residues coordinate AMP: Arg-40, His-46, and Arg-52. An alpha-D-glucose 1-phosphate-binding site is contributed by Tyr-114. Position 130 (Arg-130) interacts with AMP. Alpha-D-glucose 1-phosphate-binding positions include Gly-179, 194 to 195 (EK), and Ser-212. AMP contacts are provided by Glu-370 and Arg-386. Residues 419-423 (REMLR) and 429-431 (QER) contribute to the beta-D-fructose 1,6-bisphosphate site.

This sequence belongs to the bacterial/plant glucose-1-phosphate adenylyltransferase family. In terms of assembly, homotetramer.

It carries out the reaction alpha-D-glucose 1-phosphate + ATP + H(+) = ADP-alpha-D-glucose + diphosphate. The protein operates within glycan biosynthesis; glycogen biosynthesis. Its activity is regulated as follows. Allosterically activated by fructose-1,6-bisphosphate (F16BP) and inhibited by AMP. Its function is as follows. Involved in the biosynthesis of ADP-glucose, a building block required for the elongation reactions to produce glycogen. Catalyzes the reaction between ATP and alpha-D-glucose 1-phosphate (G1P) to produce pyrophosphate and ADP-Glc. The protein is Glucose-1-phosphate adenylyltransferase of Escherichia coli O127:H6 (strain E2348/69 / EPEC).